The sequence spans 273 residues: uncharacterized protein (273 aa).

This is an uncharacterized protein from Acanthamoeba polyphaga mimivirus (APMV).